A 247-amino-acid chain; its full sequence is uncharacterized protein (247 aa).

The protein localises to the mitochondrion. This is an uncharacterized protein from Schizosaccharomyces pombe (strain 972 / ATCC 24843) (Fission yeast).